An 81-amino-acid polypeptide reads, in one-letter code: uncharacterized protein (81 aa).

Helical transmembrane passes span 1 to 21 (MTLF…FSLL) and 27 to 47 (IFIY…HHFF).

It localises to the membrane. This is an uncharacterized protein from Saccharomyces cerevisiae (strain ATCC 204508 / S288c) (Baker's yeast).